The primary structure comprises 117 residues: Ribosome-binding factor A (117 aa).

Belongs to the RbfA family. As to quaternary structure, monomer. Binds 30S ribosomal subunits, but not 50S ribosomal subunits or 70S ribosomes.

It is found in the cytoplasm. Its function is as follows. One of several proteins that assist in the late maturation steps of the functional core of the 30S ribosomal subunit. Associates with free 30S ribosomal subunits (but not with 30S subunits that are part of 70S ribosomes or polysomes). Required for efficient processing of 16S rRNA. May interact with the 5'-terminal helix region of 16S rRNA. This Leptospira interrogans serogroup Icterohaemorrhagiae serovar copenhageni (strain Fiocruz L1-130) protein is Ribosome-binding factor A.